The primary structure comprises 747 residues: Mitochondrial inner membrane i-AAA protease supercomplex subunit YME1 (747 aa).

Residues 51 to 64 (KNSGEMPPKKEADS) show a composition bias toward basic and acidic residues. Positions 51-92 (KNSGEMPPKKEADSSGKASNKSTISSIDNSQPPPPSNTNDKT) are disordered. Over residues 66–80 (GKASNKSTISSIDNS) the composition is skewed to polar residues. 321–328 (GPPGTGKT) serves as a coordination point for ATP. His540 provides a ligand contact to Zn(2+). Glu541 is an active-site residue. Residues His544 and Asp618 each coordinate Zn(2+). The interval 718-747 (STNTVVEGPDSDERKDIGDDKPKIPTMLNA) is disordered. Basic and acidic residues predominate over residues 728–740 (SDERKDIGDDKPK).

This sequence in the N-terminal section; belongs to the AAA ATPase family. The protein in the C-terminal section; belongs to the peptidase M41 family. In terms of assembly, component of the mitochondrial inner membrane i-AAA protease supercomplex composed of MGR1, MGR3 and YME1. Interacts directly with MGR1. Zn(2+) serves as cofactor.

The protein localises to the mitochondrion inner membrane. Functionally, catalytic subunit of the mitochondrial inner membrane i-AAA protease supercomplex required for mitochondrial inner membrane protein turnover. The protease is probably ATP-dependent. Important to maintain the integrity of the mitochondrial compartment. Required both for the degradation of unassembled subunit 2 of cytochrome c oxidase (COX2) and for efficient assembly of mitochondrial respiratory chain. Binds unfolded substrates in an ATPase-independent manner; binding of folded COX2, a physiological substrate, requires an active ATPase but when COX2 is destabilized an active ATPase is no longer necessary. May process ATG32. This chain is Mitochondrial inner membrane i-AAA protease supercomplex subunit YME1 (YME1), found in Saccharomyces cerevisiae (strain ATCC 204508 / S288c) (Baker's yeast).